Reading from the N-terminus, the 479-residue chain is tRNA-dihydrouridine(20) synthase [NAD(P)+] (479 aa).

Residues 14–16 (PMV) and glutamine 87 contribute to the FMN site. The Proton donor role is filled by cysteine 116. FMN contacts are provided by residues lysine 159, histidine 187, 221-223 (NGD), and 245-246 (AR).

This sequence belongs to the Dus family. Dus2 subfamily. The cofactor is FMN.

Its subcellular location is the cytoplasm. The protein localises to the nucleus. It catalyses the reaction 5,6-dihydrouridine(20) in tRNA + NADP(+) = uridine(20) in tRNA + NADPH + H(+). It carries out the reaction 5,6-dihydrouridine(20) in tRNA + NAD(+) = uridine(20) in tRNA + NADH + H(+). The catalysed reaction is a 5,6-dihydrouridine in mRNA + NAD(+) = a uridine in mRNA + NADH + H(+). The enzyme catalyses a 5,6-dihydrouridine in mRNA + NADP(+) = a uridine in mRNA + NADPH + H(+). In terms of biological role, catalyzes the NADPH-dependent synthesis of dihydrouridine, a modified base found in the D-loop of most tRNAs. Specifically modifies U20 in cytoplasmic tRNAs. Also able to mediate dihydrouridylation of some mRNAs, thereby affecting their translation. This chain is tRNA-dihydrouridine(20) synthase [NAD(P)+], found in Schizosaccharomyces pombe (strain 972 / ATCC 24843) (Fission yeast).